The sequence spans 232 residues: tRNA (guanine-N(1)-)-methyltransferase (232 aa).

S-adenosyl-L-methionine contacts are provided by residues G111 and 131-136; that span reads IGDYIL.

It belongs to the RNA methyltransferase TrmD family. Homodimer.

Its subcellular location is the cytoplasm. The enzyme catalyses guanosine(37) in tRNA + S-adenosyl-L-methionine = N(1)-methylguanosine(37) in tRNA + S-adenosyl-L-homocysteine + H(+). Functionally, specifically methylates guanosine-37 in various tRNAs. This is tRNA (guanine-N(1)-)-methyltransferase from Bartonella tribocorum (strain CIP 105476 / IBS 506).